The primary structure comprises 160 residues: Cytochrome b6-f complex subunit 4 (160 aa).

3 helical membrane-spanning segments follow: residues 36 to 56, 95 to 115, and 131 to 151; these read LLYIFPVVILGTIACIVGLAV, LLGIALQTLVPLGLMLVPFIE, and TVFLFGTVTTIYLGIGAALPI.

The protein belongs to the cytochrome b family. PetD subfamily. In terms of assembly, the 4 large subunits of the cytochrome b6-f complex are cytochrome b6, subunit IV (17 kDa polypeptide, PetD), cytochrome f and the Rieske protein, while the 4 small subunits are PetG, PetL, PetM and PetN. The complex functions as a dimer.

The protein localises to the cellular thylakoid membrane. Its function is as follows. Component of the cytochrome b6-f complex, which mediates electron transfer between photosystem II (PSII) and photosystem I (PSI), cyclic electron flow around PSI, and state transitions. The sequence is that of Cytochrome b6-f complex subunit 4 from Parasynechococcus marenigrum (strain WH8102).